Here is a 272-residue protein sequence, read N- to C-terminus: Dermonecrotic toxin LspaSicTox-alphaII1 (272 aa).

Residue H5 is part of the active site. 2 residues coordinate Mg(2+): E25 and D27. H41 acts as the Nucleophile in catalysis. Cystine bridges form between C45/C51 and C47/C190. Position 85 (D85) interacts with Mg(2+).

This sequence belongs to the arthropod phospholipase D family. Class II subfamily. Requires Mg(2+) as cofactor. Expressed by the venom gland.

Its subcellular location is the secreted. The enzyme catalyses an N-(acyl)-sphingosylphosphocholine = an N-(acyl)-sphingosyl-1,3-cyclic phosphate + choline. The catalysed reaction is an N-(acyl)-sphingosylphosphoethanolamine = an N-(acyl)-sphingosyl-1,3-cyclic phosphate + ethanolamine. It carries out the reaction a 1-acyl-sn-glycero-3-phosphocholine = a 1-acyl-sn-glycero-2,3-cyclic phosphate + choline. It catalyses the reaction a 1-acyl-sn-glycero-3-phosphoethanolamine = a 1-acyl-sn-glycero-2,3-cyclic phosphate + ethanolamine. In terms of biological role, dermonecrotic toxins cleave the phosphodiester linkage between the phosphate and headgroup of certain phospholipids (sphingolipid and lysolipid substrates), forming an alcohol (often choline) and a cyclic phosphate. This toxin acts on sphingomyelin (SM). It may also act on ceramide phosphoethanolamine (CPE), lysophosphatidylcholine (LPC) and lysophosphatidylethanolamine (LPE), but not on lysophosphatidylserine (LPS), and lysophosphatidylglycerol (LPG). It acts by transphosphatidylation, releasing exclusively cyclic phosphate products as second products. Induces dermonecrosis, hemolysis, increased vascular permeability, edema, inflammatory response, and platelet aggregation. This Loxosceles spadicea (Recluse spider) protein is Dermonecrotic toxin LspaSicTox-alphaII1.